The sequence spans 430 residues: Paraneoplastic antigen-like protein 8A (430 aa).

Residues 219 to 228 (WKNTEDHGDP) show a composition bias toward basic and acidic residues. 3 disordered regions span residues 219 to 270 (WKNT…NSNY), 313 to 364 (DPSD…RKKK), and 392 to 430 (GLGARRAVSVPHDAPASTSRPQKTKLGAFPRVSKDSRKL). The span at 232-250 (LVRRPGGKIRSRRRKQKKN) shows a compositional bias: basic residues. Over residues 261–270 (SQGSNYNSNY) the composition is skewed to polar residues.

The protein belongs to the PNMA family.

This chain is Paraneoplastic antigen-like protein 8A, found in Mus musculus (Mouse).